The chain runs to 380 residues: MWRSLGLALALCLLPYGGAESQGQSSACYKAPEWYIGDQNPMLNSEGKVTVVALLQASUYLCLLQASRLEDLRIKLESQGYFNISYIVVNHQGSPSQLKHSHLKKQVSEHIAVYRQEEDGIDVWTLLNGNKDDFLIYDRCGRLVYHLGLPYSFLTFPYVEEAIKIAYCEERCGNCNLTSLEDEDFCKTVTSATANKTAEPSEAHSHHKHHNKHGQEHLGSSKPSENQQPGPSETTLPPSGLHHHHRHRGQHRQGHLESUDTTASEGLHLSLAQRKLURRGCINQLLCKLSKESEAAPSSCCCHCRHLIFEKSGSAIAUQCAENLPSLCSUQGLFAEEKVTESCQCRSPPAAUQNQPMNPMEANPNUSUDNQTRKUKUHSN.

A signal peptide spans 1–19 (MWRSLGLALALCLLPYGGA). Residue Sec-59 is a non-standard amino acid, selenocysteine. N-linked (GlcNAc...) asparagine glycans are attached at residues Asn-83, Asn-176, and Asn-195. Residues 196–257 (KTAEPSEAHS…RGQHRQGHLE (62 aa)) are disordered. Residues 221–237 (SKPSENQQPGPSETTLP) are compositionally biased toward polar residues. Positions 241 to 253 (LHHHHRHRGQHRQ) are enriched in basic residues. Position 259 (Sec-259) is a non-standard amino acid, selenocysteine. Phosphoserine is present on Ser-264. Non-standard amino acids (selenocysteine) are located at Sec-277, Sec-318, Sec-330, and Sec-352. Positions 346–380 (RSPPAAUQNQPMNPMEANPNUSUDNQTRKUKUHSN) are disordered. Over residues 348–360 (PPAAUQNQPMNPM) the composition is skewed to low complexity. Residue Asn-365 is glycosylated (N-linked (GlcNAc...) asparagine). 2 non-standard amino acids (selenocysteine) are found at residues Sec-366 and Sec-368. Asn-370 carries an N-linked (GlcNAc...) asparagine glycan. 2 non-standard amino acids (selenocysteine) are found at residues Sec-375 and Sec-377.

Belongs to the selenoprotein P family. Phosphorylation sites are present in the extracellular medium. In terms of tissue distribution, in the kidney, expressed in the cortex with no expression observed in the medulla (at protein level). Expressed by the liver and secreted in plasma.

The protein resides in the secreted. Its function is as follows. Might be responsible for some of the extracellular antioxidant defense properties of selenium or might be involved in the transport of selenium. May supply selenium to tissues such as brain and testis. The chain is Selenoprotein P from Mus musculus (Mouse).